Here is a 206-residue protein sequence, read N- to C-terminus: 3-isopropylmalate dehydratase small subunit (206 aa).

The protein belongs to the LeuD family. LeuD type 1 subfamily. As to quaternary structure, heterodimer of LeuC and LeuD.

It catalyses the reaction (2R,3S)-3-isopropylmalate = (2S)-2-isopropylmalate. The protein operates within amino-acid biosynthesis; L-leucine biosynthesis; L-leucine from 3-methyl-2-oxobutanoate: step 2/4. Catalyzes the isomerization between 2-isopropylmalate and 3-isopropylmalate, via the formation of 2-isopropylmaleate. In Leptospira borgpetersenii serovar Hardjo-bovis (strain JB197), this protein is 3-isopropylmalate dehydratase small subunit.